The chain runs to 259 residues: tRNA (guanine-N(7)-)-methyltransferase (259 aa).

Residues 1–11 (MSNTDNSDKNT) show a composition bias toward basic and acidic residues. A disordered region spans residues 1-29 (MSNTDNSDKNTKPTGYRPPQTDFNTEFGN). Glutamate 89, glutamate 114, aspartate 141, and aspartate 164 together coordinate S-adenosyl-L-methionine. Aspartate 164 is a catalytic residue. Residues lysine 168, aspartate 200, and 238 to 241 (TKFE) each bind substrate.

This sequence belongs to the class I-like SAM-binding methyltransferase superfamily. TrmB family.

The catalysed reaction is guanosine(46) in tRNA + S-adenosyl-L-methionine = N(7)-methylguanosine(46) in tRNA + S-adenosyl-L-homocysteine. Its pathway is tRNA modification; N(7)-methylguanine-tRNA biosynthesis. Its function is as follows. Catalyzes the formation of N(7)-methylguanine at position 46 (m7G46) in tRNA. The sequence is that of tRNA (guanine-N(7)-)-methyltransferase from Corynebacterium diphtheriae (strain ATCC 700971 / NCTC 13129 / Biotype gravis).